The sequence spans 994 residues: Regulator of telomere elongation helicase 1 homolog (994 aa).

Positions serine 15–aspartate 324 constitute a Helicase ATP-binding domain. Serine 50–threonine 57 serves as a coordination point for ATP. 4 residues coordinate [4Fe-4S] cluster: cysteine 142, cysteine 160, cysteine 169, and cysteine 208. Residues aspartate 251–histidine 254 carry the DEAH box motif. A compositionally biased stretch (basic and acidic residues) spans lysine 818–lysine 831. Residues lysine 818–lysine 896 are disordered. The span at aspartate 833 to threonine 844 shows a compositional bias: polar residues. Basic and acidic residues predominate over residues aspartate 847–glutamine 856. Polar residues-rich tracts occupy residues aspartate 859 to aspartate 869 and proline 880 to valine 889.

It belongs to the helicase family. RAD3/XPD subfamily.

Its subcellular location is the nucleus. It carries out the reaction ATP + H2O = ADP + phosphate + H(+). Its function is as follows. A probable ATP-dependent DNA helicase implicated in DNA repair and the maintenance of genomic stability. Acts as an anti-recombinase to counteract toxic recombination and limit crossover during meiosis. Regulates meiotic recombination and crossover homeostasis by physically dissociating strand invasion events and thereby promotes noncrossover repair by meiotic synthesis dependent strand annealing (SDSA) as well as disassembly of D loop recombination intermediates. This is Regulator of telomere elongation helicase 1 homolog from Caenorhabditis briggsae.